A 506-amino-acid chain; its full sequence is Dolichyl pyrophosphate Glc1Man9GlcNAc2 alpha-1,3-glucosyltransferase (506 aa).

A run of 12 helical transmembrane segments spans residues 10 to 30 (RLLL…IPSS), 101 to 121 (VIYF…YGVY), 133 to 153 (NLIC…HIHF), 176 to 196 (LLGG…AVTA), 219 to 239 (LVTI…PFIY), 261 to 281 (YWAP…AVLL), 305 to 325 (PFAV…LLAI), 339 to 359 (GLVA…GWHV), 384 to 401 (HYFL…PLLY), 406 to 426 (YPIK…GFAA), 454 to 474 (YLMG…YFLG), and 479 to 499 (FLPL…SWIW).

This sequence belongs to the ALG6/ALG8 glucosyltransferase family.

It is found in the endoplasmic reticulum membrane. It catalyses the reaction an alpha-D-Glc-(1-&gt;3)-alpha-D-Man-(1-&gt;2)-alpha-D-Man-(1-&gt;2)-alpha-D-Man-(1-&gt;3)-[alpha-D-Man-(1-&gt;2)-alpha-D-Man-(1-&gt;3)-[alpha-D-Man-(1-&gt;2)-alpha-D-Man-(1-&gt;6)]-alpha-D-Man-(1-&gt;6)]-beta-D-Man-(1-&gt;4)-beta-D-GlcNAc-(1-&gt;4)-alpha-D-GlcNAc-diphospho-di-trans,poly-cis-dolichol + a di-trans,poly-cis-dolichyl beta-D-glucosyl phosphate = an alpha-D-Glc-(1-&gt;3)-alpha-D-Glc-(1-&gt;3)-alpha-D-Man-(1-&gt;2)-alpha-D-Man-(1-&gt;2)-alpha-D-Man-(1-&gt;3)-[alpha-D-Man-(1-&gt;2)-alpha-D-Man-(1-&gt;3)-[alpha-D-Man-(1-&gt;2)-alpha-D-Man-(1-&gt;6)]-alpha-D-Man-(1-&gt;6)]-beta-D-Man-(1-&gt;4)-beta-D-GlcNAc-(1-&gt;4)-alpha-D-GlcNAc-diphospho-di-trans,poly-cis-dolichol + a di-trans,poly-cis-dolichyl phosphate + H(+). It participates in protein modification; protein glycosylation. Functionally, dolichyl pyrophosphate Glc1Man9GlcNAc2 alpha-1,3-glucosyltransferase that operates in the biosynthetic pathway of dolichol-linked oligosaccharides, the glycan precursors employed in protein asparagine (N)-glycosylation. The assembly of dolichol-linked oligosaccharides begins on the cytosolic side of the endoplasmic reticulum membrane and finishes in its lumen. The sequential addition of sugars to dolichol pyrophosphate produces dolichol-linked oligosaccharides containing fourteen sugars, including two GlcNAcs, nine mannoses and three glucoses. Once assembled, the oligosaccharide is transferred from the lipid to nascent proteins by oligosaccharyltransferases. In the lumen of the endoplasmic reticulum, adds the second glucose residue from dolichyl phosphate glucose (Dol-P-Glc) onto the lipid-linked oligosaccharide intermediate Glc(1)Man(9)GlcNAc(2)-PP-Dol to produce Glc(2)Man(9)GlcNAc(2)-PP-Dol. The chain is Dolichyl pyrophosphate Glc1Man9GlcNAc2 alpha-1,3-glucosyltransferase from Arabidopsis thaliana (Mouse-ear cress).